A 324-amino-acid polypeptide reads, in one-letter code: Protein translocase subunit SecF (324 aa).

The next 6 helical transmembrane spans lie at 16–36, 145–165, 174–194, 201–221, 247–269, and 276–295; these read FFWA…ASLV, LIRS…VYIW, LGSV…FALF, TTVA…VVVF, TLSR…LVFG, and FVFA…VYMA.

It belongs to the SecD/SecF family. SecF subfamily. As to quaternary structure, forms a complex with SecD. Part of the essential Sec protein translocation apparatus which comprises SecA, SecYEG and auxiliary proteins SecDF-YajC and YidC.

It is found in the cell inner membrane. Part of the Sec protein translocase complex. Interacts with the SecYEG preprotein conducting channel. SecDF uses the proton motive force (PMF) to complete protein translocation after the ATP-dependent function of SecA. The chain is Protein translocase subunit SecF from Cereibacter sphaeroides (strain ATCC 17023 / DSM 158 / JCM 6121 / CCUG 31486 / LMG 2827 / NBRC 12203 / NCIMB 8253 / ATH 2.4.1.) (Rhodobacter sphaeroides).